The chain runs to 518 residues: Protein FAM98A (518 aa).

2 disordered regions span residues 300–415 (GRVP…GHSS) and 434–518 (GSGY…HYTS). The segment covering 302-311 (VPDRGGRPNE) has biased composition (basic and acidic residues). Composition is skewed to gly residues over residues 349-364 (GGRGGHEQGGGRGGRG), 383-396 (WTDGGSGGGGGYQD), and 405-415 (QPGGYHGGHSS). The span at 447–459 (RYQDGGHHGDRGG) shows a compositional bias: basic and acidic residues. The segment covering 460 to 484 (GRGGRGGRGGRGGRAGQGGGWGGRG) has biased composition (gly residues). The segment covering 488-504 (YHQGGQFEQHFQHGGYQ) has biased composition (low complexity). Residues 505 to 518 (YNHSGFGQGRHYTS) are compositionally biased toward polar residues.

It belongs to the FAM98 family. In terms of assembly, interacts (via N- and C-terminus) with DDX1. Interacts (via N- and C-terminus) with C14orf166. Interacts with FAM98B. Interacts with PLEKHM1 (via N- and C-terminus).

Positively stimulates PRMT1-induced protein arginine methylation. Involved in skeletal homeostasis. Positively regulates lysosome peripheral distribution and ruffled border formation in osteoclasts. This is Protein FAM98A from Pongo abelii (Sumatran orangutan).